Here is a 380-residue protein sequence, read N- to C-terminus: Tryptophan 2,3-dioxygenase (380 aa).

Substrate is bound by residues 57–61 and arginine 128; that span reads FIITH. Histidine 313 is a heme binding site. Threonine 328 is a binding site for substrate.

Belongs to the tryptophan 2,3-dioxygenase family. As to quaternary structure, homotetramer. Dimer of dimers. The cofactor is heme.

It catalyses the reaction L-tryptophan + O2 = N-formyl-L-kynurenine. It functions in the pathway amino-acid degradation; L-tryptophan degradation via kynurenine pathway; L-kynurenine from L-tryptophan: step 1/2. It participates in pigment biosynthesis; ommochrome biosynthesis. In terms of biological role, heme-dependent dioxygenase that catalyzes the oxidative cleavage of the L-tryptophan (L-Trp) pyrrole ring and converts L-tryptophan to N-formyl-L-kynurenine. Catalyzes the oxidative cleavage of the indole moiety. The protein is Tryptophan 2,3-dioxygenase of Drosophila mojavensis (Fruit fly).